The sequence spans 125 residues: Cystatin-like cysteine protease inhibitor EPIC2A (125 aa).

An N-terminal signal peptide occupies residues 1-21; that stretch reads MSFLRPTLALLAVTALVTTSA. A glycan (N-linked (GlcNAc...) asparagine) is linked at N45. The short motif at 68–72 is the Secondary area of contact element; sequence QVVSG.

The protein belongs to the cystatin family.

It localises to the secreted. Secreted effector that interacts with and inhibits host apoplastic pathogenesis-related papain-like cysteine proteases. Inhibition of host proteases by a pathogen extracellular protease inhibitor forms a specific type of defense-counterdefense mechanism between plants and microbial pathogens. This is Cystatin-like cysteine protease inhibitor EPIC2A from Phytophthora infestans (strain T30-4) (Potato late blight agent).